Here is a 440-residue protein sequence, read N- to C-terminus: Trigger factor (440 aa).

The 86-residue stretch at 163–248 (GDGVTVDFEG…VKKIESAHLP (86 aa)) folds into the PPIase FKBP-type domain.

It belongs to the FKBP-type PPIase family. Tig subfamily.

It localises to the cytoplasm. It carries out the reaction [protein]-peptidylproline (omega=180) = [protein]-peptidylproline (omega=0). Involved in protein export. Acts as a chaperone by maintaining the newly synthesized protein in an open conformation. Functions as a peptidyl-prolyl cis-trans isomerase. This chain is Trigger factor, found in Verminephrobacter eiseniae (strain EF01-2).